Reading from the N-terminus, the 112-residue chain is Truncated ankyrin repeat protein B25 (112 aa).

The protein belongs to the orthopoxviruses B25 protein family.

The protein is Truncated ankyrin repeat protein B25 of Bos taurus (Bovine).